We begin with the raw amino-acid sequence, 271 residues long: Aspartate/glutamate leucyltransferase (271 aa).

This sequence belongs to the R-transferase family. Bpt subfamily.

The protein localises to the cytoplasm. It catalyses the reaction N-terminal L-glutamyl-[protein] + L-leucyl-tRNA(Leu) = N-terminal L-leucyl-L-glutamyl-[protein] + tRNA(Leu) + H(+). It carries out the reaction N-terminal L-aspartyl-[protein] + L-leucyl-tRNA(Leu) = N-terminal L-leucyl-L-aspartyl-[protein] + tRNA(Leu) + H(+). Functionally, functions in the N-end rule pathway of protein degradation where it conjugates Leu from its aminoacyl-tRNA to the N-termini of proteins containing an N-terminal aspartate or glutamate. The protein is Aspartate/glutamate leucyltransferase of Acinetobacter baylyi (strain ATCC 33305 / BD413 / ADP1).